The chain runs to 31 residues: Cyclotide mden-K (31 aa).

The segment at residues 1-31 (GSIPCGESCVWIPCISSVVGCACKNKVCYKN) is a cross-link (cyclopeptide (Gly-Asn)). Cystine bridges form between Cys5-Cys21, Cys9-Cys23, and Cys14-Cys28.

It belongs to the cyclotide family. Bracelet subfamily. In terms of processing, this is a cyclic peptide.

Its function is as follows. Probably participates in a plant defense mechanism. In Melicytus dentatus (Tree violet), this protein is Cyclotide mden-K.